The following is a 324-amino-acid chain: Gamma-soluble NSF attachment protein (324 aa).

Residues 285-298 show a composition bias toward polar residues; sequence NPTINSTAPQQQYS. Residues 285–324 form a disordered region; it reads NPTINSTAPQQQYSNTTTTTTNNTNNNNPTSQQDDDEDVL. A compositionally biased stretch (low complexity) spans 299 to 312; sequence NTTTTTTNNTNNNN.

This sequence belongs to the SNAP family. Interacts with nsfA and probably SNARE proteins.

The protein resides in the cytoplasmic vesicle membrane. Its function is as follows. May be required for vesicular transport between the endoplasmic reticulum and the Golgi apparatus. Involved in vesicle fusion with nsfA and probably SNARE proteins. This Dictyostelium discoideum (Social amoeba) protein is Gamma-soluble NSF attachment protein (snpC).